A 236-amino-acid polypeptide reads, in one-letter code: MEKREELYRGKAKSVYKTDDADRLILLFRNDTSAFDGKRIEQLDRKGMVNNKFNAFIMQKLEEAGVPTQFDKLLGDNECLVKKLDMIPVECVVRNYAAGSLVKRLGIEEGTRLNPYTFELFLKDDAKGDPFINESHVVAFGWGTAEQLVRMKELSIKVNEVLTKLFDDAGLLLVDFKLEFGVFHGEIVLGDEFSPDGCRLWDKDTRKKMDKDRFRQGLGDVIEAYEEVANRLGVPL.

Belongs to the SAICAR synthetase family.

It catalyses the reaction 5-amino-1-(5-phospho-D-ribosyl)imidazole-4-carboxylate + L-aspartate + ATP = (2S)-2-[5-amino-1-(5-phospho-beta-D-ribosyl)imidazole-4-carboxamido]succinate + ADP + phosphate + 2 H(+). Its pathway is purine metabolism; IMP biosynthesis via de novo pathway; 5-amino-1-(5-phospho-D-ribosyl)imidazole-4-carboxamide from 5-amino-1-(5-phospho-D-ribosyl)imidazole-4-carboxylate: step 1/2. This Pseudomonas savastanoi pv. phaseolicola (strain 1448A / Race 6) (Pseudomonas syringae pv. phaseolicola (strain 1448A / Race 6)) protein is Phosphoribosylaminoimidazole-succinocarboxamide synthase.